A 448-amino-acid chain; its full sequence is Pre-mRNA-splicing factor SAD1 (448 aa).

Position 1 is an N-acetylmethionine (Met-1). The UBP-type; degenerate zinc-finger motif lies at 27-124; that stretch reads PNYAYLETVV…NSIKFAAYPT (98 aa). The Zn(2+) site is built by Cys-60, Cys-63, His-79, and His-85. The USP domain occupies 150-447; that stretch reads IGFTNAATYD…ETFIQVWEKQ (298 aa).

In terms of assembly, component of the 45S U1.U2.U4/U6.U5 penta-snRNP particle, a subcomplex of the spliceosome.

It localises to the nucleus. Promotes the assembly of newly synthesized U4 snRNA into the U4/U6 snRNP particle. Required for splicing of pre-mRNA. This Saccharomyces cerevisiae (strain ATCC 204508 / S288c) (Baker's yeast) protein is Pre-mRNA-splicing factor SAD1 (SAD1).